Reading from the N-terminus, the 211-residue chain is Probable GTP-binding protein EngB (211 aa).

One can recognise an EngB-type G domain in the interval 30–204; the sequence is EGFEVAFAGR…YTVLADWMEL (175 aa). GTP is bound by residues 38–45, 64–68, 82–85, 149–152, and 182–185; these read GRSNAGKS, GRTQL, DLPG, TKAD, and LFSA. Residues Ser-45 and Thr-66 each contribute to the Mg(2+) site.

It belongs to the TRAFAC class TrmE-Era-EngA-EngB-Septin-like GTPase superfamily. EngB GTPase family. Mg(2+) is required as a cofactor.

Its function is as follows. Necessary for normal cell division and for the maintenance of normal septation. This is Probable GTP-binding protein EngB from Pseudomonas savastanoi pv. phaseolicola (strain 1448A / Race 6) (Pseudomonas syringae pv. phaseolicola (strain 1448A / Race 6)).